The primary structure comprises 63 residues: Cytochrome c oxidase subunit 5A, mitochondrial (63 aa).

It belongs to the cytochrome c oxidase subunit 5A family. Component of the cytochrome c oxidase (complex IV, CIV), a multisubunit enzyme composed of a catalytic core of 3 subunits and several supernumerary subunits. The complex exists as a monomer or a dimer and forms supercomplexes (SCs) in the inner mitochondrial membrane with ubiquinol-cytochrome c oxidoreductase (cytochrome b-c1 complex, complex III, CIII).

The protein resides in the mitochondrion inner membrane. Its pathway is energy metabolism; oxidative phosphorylation. Component of the cytochrome c oxidase, the last enzyme in the mitochondrial electron transport chain which drives oxidative phosphorylation. The respiratory chain contains 3 multisubunit complexes succinate dehydrogenase (complex II, CII), ubiquinol-cytochrome c oxidoreductase (cytochrome b-c1 complex, complex III, CIII) and cytochrome c oxidase (complex IV, CIV), that cooperate to transfer electrons derived from NADH and succinate to molecular oxygen, creating an electrochemical gradient over the inner membrane that drives transmembrane transport and the ATP synthase. Cytochrome c oxidase is the component of the respiratory chain that catalyzes the reduction of oxygen to water. Electrons originating from reduced cytochrome c in the intermembrane space (IMS) are transferred via the dinuclear copper A center (CU(A)) of subunit 2 and heme A of subunit 1 to the active site in subunit 1, a binuclear center (BNC) formed by heme A3 and copper B (CU(B)). The BNC reduces molecular oxygen to 2 water molecules using 4 electrons from cytochrome c in the IMS and 4 protons from the mitochondrial matrix. In Manduca sexta (Tobacco hawkmoth), this protein is Cytochrome c oxidase subunit 5A, mitochondrial (COVA).